A 113-amino-acid polypeptide reads, in one-letter code: MSQAQQIKVSDKAEALVENLKENKVIGRKEIKIKVYHIGSPTPSRADIRKAISSFIGAKEDLVVIRKINTGYGAGISEATIHVYSEKDVLSKFEPAHLVNRGNKAKTQGEASG.

It belongs to the eukaryotic ribosomal protein eS24 family.

The polypeptide is Small ribosomal subunit protein eS24 (Metallosphaera sedula (strain ATCC 51363 / DSM 5348 / JCM 9185 / NBRC 15509 / TH2)).